The sequence spans 137 residues: Proofreading thioesterase EntH (137 aa).

E63 functions as the Nucleophile or proton acceptor in the catalytic mechanism.

The protein belongs to the thioesterase PaaI family. As to quaternary structure, homotetramer. Dimer of dimers. Interacts specifically with the aryl carrier protein (ArCP) domain of EntB.

The protein resides in the cytoplasm. It participates in siderophore biosynthesis; enterobactin biosynthesis. In terms of biological role, required for optimal enterobactin synthesis. Acts as a proofreading enzyme that prevents EntB misacylation by hydrolyzing the thioester bound existing between EntB and wrongly charged molecules. The chain is Proofreading thioesterase EntH from Salmonella paratyphi B (strain ATCC BAA-1250 / SPB7).